A 458-amino-acid chain; its full sequence is Bifunctional protein GlmU (458 aa).

The interval 1 to 232 (MISPLSVIIL…TFEIEGVNNR (232 aa)) is pyrophosphorylase. UDP-N-acetyl-alpha-D-glucosamine-binding positions include 10–13 (LAAG), lysine 24, glutamine 79, 84–85 (GT), 106–108 (YGD), glycine 142, glutamate 157, asparagine 172, and asparagine 230. Residue aspartate 108 coordinates Mg(2+). Residue asparagine 230 participates in Mg(2+) binding. Positions 233-253 (QQLASLERTWQGKLVADLQEA) are linker. Residues 254–458 (GVQFADPTRV…KDNFQRPTKK (205 aa)) form an N-acetyltransferase region. Residues arginine 336 and lysine 354 each coordinate UDP-N-acetyl-alpha-D-glucosamine. The active-site Proton acceptor is histidine 366. Residues tyrosine 369 and asparagine 380 each coordinate UDP-N-acetyl-alpha-D-glucosamine. Residues alanine 383, 389–390 (NY), serine 408, alanine 426, and arginine 443 each bind acetyl-CoA.

In the N-terminal section; belongs to the N-acetylglucosamine-1-phosphate uridyltransferase family. This sequence in the C-terminal section; belongs to the transferase hexapeptide repeat family. As to quaternary structure, homotrimer. Requires Mg(2+) as cofactor.

It is found in the cytoplasm. It catalyses the reaction alpha-D-glucosamine 1-phosphate + acetyl-CoA = N-acetyl-alpha-D-glucosamine 1-phosphate + CoA + H(+). The enzyme catalyses N-acetyl-alpha-D-glucosamine 1-phosphate + UTP + H(+) = UDP-N-acetyl-alpha-D-glucosamine + diphosphate. The protein operates within nucleotide-sugar biosynthesis; UDP-N-acetyl-alpha-D-glucosamine biosynthesis; N-acetyl-alpha-D-glucosamine 1-phosphate from alpha-D-glucosamine 6-phosphate (route II): step 2/2. Its pathway is nucleotide-sugar biosynthesis; UDP-N-acetyl-alpha-D-glucosamine biosynthesis; UDP-N-acetyl-alpha-D-glucosamine from N-acetyl-alpha-D-glucosamine 1-phosphate: step 1/1. It functions in the pathway bacterial outer membrane biogenesis; LPS lipid A biosynthesis. Functionally, catalyzes the last two sequential reactions in the de novo biosynthetic pathway for UDP-N-acetylglucosamine (UDP-GlcNAc). The C-terminal domain catalyzes the transfer of acetyl group from acetyl coenzyme A to glucosamine-1-phosphate (GlcN-1-P) to produce N-acetylglucosamine-1-phosphate (GlcNAc-1-P), which is converted into UDP-GlcNAc by the transfer of uridine 5-monophosphate (from uridine 5-triphosphate), a reaction catalyzed by the N-terminal domain. This is Bifunctional protein GlmU from Psychrobacter arcticus (strain DSM 17307 / VKM B-2377 / 273-4).